The primary structure comprises 271 residues: Aminoglycoside 3'-phosphotransferase (271 aa).

Asp-198 acts as the Proton acceptor in catalysis.

It belongs to the aminoglycoside phosphotransferase family.

It carries out the reaction kanamycin A + ATP = kanamycin 3'-phosphate + ADP + H(+). Resistance to kanamycin and structurally-related aminoglycosides, including amikacin. This is Aminoglycoside 3'-phosphotransferase (aphA) from Escherichia coli.